Consider the following 140-residue polypeptide: Cytochrome c-type biogenesis protein CcmE (140 aa).

Topologically, residues 1–7 (MKRKHKR) are cytoplasmic. Residues 8–28 (LLFVLASFCAAGCALLFILSE) form a helical; Signal-anchor for type II membrane protein membrane-spanning segment. Residues 29–140 (LRESVSFFYT…TIPKALPEPK (112 aa)) are Periplasmic-facing. Residues His-121 and Tyr-125 each contribute to the heme site.

This sequence belongs to the CcmE/CycJ family.

The protein localises to the cell inner membrane. Functionally, heme chaperone required for the biogenesis of c-type cytochromes. Transiently binds heme delivered by CcmC and transfers the heme to apo-cytochromes in a process facilitated by CcmF and CcmH. This chain is Cytochrome c-type biogenesis protein CcmE, found in Anaplasma marginale (strain Florida).